The primary structure comprises 417 residues: Riboflavin biosynthesis protein RibBA (417 aa).

Residues 1 to 204 form a DHBP synthase region; the sequence is MTRFDSIERA…IADLIAWRRK (204 aa). D-ribulose 5-phosphate-binding positions include 28–29, aspartate 33, 141–145, and glutamate 165; these read RE and RPGHT. Glutamate 29 serves as a coordination point for Mg(2+). Residue histidine 144 coordinates Mg(2+). A GTP cyclohydrolase II region spans residues 205–417; the sequence is HEKHVERVAS…LDDFEAGEML (213 aa). 259–263 contributes to the GTP binding site; sequence RVHSE. Zn(2+) is bound by residues cysteine 264, cysteine 275, and cysteine 277. Residues glutamine 280, 303-305, and threonine 325 contribute to the GTP site; that span reads EGR. The active-site Proton acceptor; for GTP cyclohydrolase activity is aspartate 337. Arginine 339 (nucleophile; for GTP cyclohydrolase activity) is an active-site residue. Residues threonine 360 and lysine 365 each contribute to the GTP site.

In the N-terminal section; belongs to the DHBP synthase family. This sequence in the C-terminal section; belongs to the GTP cyclohydrolase II family. The cofactor is Mg(2+). Mn(2+) serves as cofactor. It depends on Zn(2+) as a cofactor.

The catalysed reaction is D-ribulose 5-phosphate = (2S)-2-hydroxy-3-oxobutyl phosphate + formate + H(+). It catalyses the reaction GTP + 4 H2O = 2,5-diamino-6-hydroxy-4-(5-phosphoribosylamino)-pyrimidine + formate + 2 phosphate + 3 H(+). Its pathway is cofactor biosynthesis; riboflavin biosynthesis; 2-hydroxy-3-oxobutyl phosphate from D-ribulose 5-phosphate: step 1/1. It functions in the pathway cofactor biosynthesis; riboflavin biosynthesis; 5-amino-6-(D-ribitylamino)uracil from GTP: step 1/4. Functionally, catalyzes the conversion of D-ribulose 5-phosphate to formate and 3,4-dihydroxy-2-butanone 4-phosphate. In terms of biological role, catalyzes the conversion of GTP to 2,5-diamino-6-ribosylamino-4(3H)-pyrimidinone 5'-phosphate (DARP), formate and pyrophosphate. This Rhodococcus jostii (strain RHA1) protein is Riboflavin biosynthesis protein RibBA.